Consider the following 146-residue polypeptide: D-aminoacyl-tRNA deacylase (146 aa).

The short motif at 137–138 (GP) is the Gly-cisPro motif, important for rejection of L-amino acids element.

It belongs to the DTD family. Homodimer.

It localises to the cytoplasm. It carries out the reaction glycyl-tRNA(Ala) + H2O = tRNA(Ala) + glycine + H(+). It catalyses the reaction a D-aminoacyl-tRNA + H2O = a tRNA + a D-alpha-amino acid + H(+). Functionally, an aminoacyl-tRNA editing enzyme that deacylates mischarged D-aminoacyl-tRNAs. Also deacylates mischarged glycyl-tRNA(Ala), protecting cells against glycine mischarging by AlaRS. Acts via tRNA-based rather than protein-based catalysis; rejects L-amino acids rather than detecting D-amino acids in the active site. By recycling D-aminoacyl-tRNA to D-amino acids and free tRNA molecules, this enzyme counteracts the toxicity associated with the formation of D-aminoacyl-tRNA entities in vivo and helps enforce protein L-homochirality. The polypeptide is D-aminoacyl-tRNA deacylase (Bacillus cytotoxicus (strain DSM 22905 / CIP 110041 / 391-98 / NVH 391-98)).